A 153-amino-acid polypeptide reads, in one-letter code: Actin-related protein 2/3 complex subunit 5-like protein (153 aa).

Serine 64 carries the phosphoserine modification.

The protein belongs to the ARPC5 family. May be a component of the Arp2/3 complex in which it may replace ARPC5.

Its subcellular location is the cytoplasm. It localises to the cytoskeleton. May function as component of the Arp2/3 complex which is involved in regulation of actin polymerization and together with an activating nucleation-promoting factor (NPF) mediates the formation of branched actin networks. The sequence is that of Actin-related protein 2/3 complex subunit 5-like protein (Arpc5l) from Mus musculus (Mouse).